The sequence spans 144 residues: Probable copper-binding protein PcoE (144 aa).

An N-terminal signal peptide occupies residues 1–20 (MKKILVSFVAIMAVASSAMA). A disordered region spans residues 86 to 144 (MHKKMMKSKPAASNETAKSFSEMNEHEKSAVVHEKANNGQSSVIHQQQAEKHRSQITQN). Residues 96–107 (AASNETAKSFSE) show a composition bias toward polar residues. Residues 108–121 (MNEHEKSAVVHEKA) are compositionally biased toward basic and acidic residues. Residues 122–132 (NNGQSSVIHQQ) show a composition bias toward polar residues.

This sequence to S.typhimurium SilE.

It is found in the periplasm. Required for the copper-inducible expression of copper resistance. Activated by the two-component regulatory system CusS/CusR. The protein is Probable copper-binding protein PcoE (pcoE) of Escherichia coli.